The following is a 340-amino-acid chain: MIYENLLRPLLFRLDPETAHELSLSALRLAAKLGPANPLKQSLPTSPRTVMGLEFPNPIGLAAGLDKNGDCIDGLAALGFGFLEIGTVTPRPQPGNPRPRLFRVPEAGALVNRMGFNNSGVAHLIARVRQTRYRGILGINIGKNLTTPVERALDDYREGLKAVYPYAHYVTLNVSSPNTPGLRSLQFGALLDELLDGLMGEREELTAQHGKRVPLALKVAPDMDSREIKALAGAVVRHGVDAVIATNTTASRDGVEGLEHADEAGGLSGKPLFLRSTEVVARLADALQGRAPIIACGGVFSGADAVAKFEAGASLVQVYTGFIYRGPALLAEIGRVVAAL.

Residues 63-67 and Thr87 each bind FMN; that span reads AGLDK. Lys67 provides a ligand contact to substrate. Position 112–116 (112–116) interacts with substrate; sequence NRMGF. FMN is bound by residues Asn140 and Asn173. Substrate is bound at residue Asn173. The active-site Nucleophile is the Ser176. Asn178 is a binding site for substrate. FMN is bound by residues Lys218 and Thr246. 247 to 248 contacts substrate; the sequence is NT. Residues Gly269, Gly298, and 319–320 contribute to the FMN site; that span reads YT.

It belongs to the dihydroorotate dehydrogenase family. Type 2 subfamily. As to quaternary structure, monomer. The cofactor is FMN.

The protein localises to the cell membrane. It carries out the reaction (S)-dihydroorotate + a quinone = orotate + a quinol. Its pathway is pyrimidine metabolism; UMP biosynthesis via de novo pathway; orotate from (S)-dihydroorotate (quinone route): step 1/1. Functionally, catalyzes the conversion of dihydroorotate to orotate with quinone as electron acceptor. In Methylococcus capsulatus (strain ATCC 33009 / NCIMB 11132 / Bath), this protein is Dihydroorotate dehydrogenase (quinone).